The primary structure comprises 222 residues: Methylthioribulose-1-phosphate dehydratase (222 aa).

Residues His-94 and His-96 each coordinate Zn(2+).

It belongs to the aldolase class II family. MtnB subfamily. Zn(2+) serves as cofactor.

It catalyses the reaction 5-(methylsulfanyl)-D-ribulose 1-phosphate = 5-methylsulfanyl-2,3-dioxopentyl phosphate + H2O. It participates in amino-acid biosynthesis; L-methionine biosynthesis via salvage pathway; L-methionine from S-methyl-5-thio-alpha-D-ribose 1-phosphate: step 2/6. Its function is as follows. Catalyzes the dehydration of methylthioribulose-1-phosphate (MTRu-1-P) into 2,3-diketo-5-methylthiopentyl-1-phosphate (DK-MTP-1-P). The protein is Methylthioribulose-1-phosphate dehydratase of Yersinia pseudotuberculosis serotype IB (strain PB1/+).